The chain runs to 285 residues: Methionine aminopeptidase 2 (285 aa).

Position 114 (H114) interacts with substrate. Positions 131, 142, and 205 each coordinate a divalent metal cation. Residue H212 participates in substrate binding. Positions 238 and 269 each coordinate a divalent metal cation.

As to quaternary structure, monomer. Requires Co(2+) as cofactor. Zn(2+) serves as cofactor. Mn(2+) is required as a cofactor. The cofactor is Fe(2+).

The enzyme catalyses Release of N-terminal amino acids, preferentially methionine, from peptides and arylamides.. Its activity is regulated as follows. Inhibited by bengamide derivatives and by various metalloform-selective inhibitors. Its function is as follows. Removes the N-terminal methionine from nascent proteins. The N-terminal methionine is often cleaved when the second residue in the primary sequence is small and uncharged (Met-Ala-, Cys, Gly, Pro, Ser, Thr, or Val). Requires deformylation of the N(alpha)-formylated initiator methionine before it can be hydrolyzed. The sequence is that of Methionine aminopeptidase 2 from Mycobacterium tuberculosis (strain ATCC 25618 / H37Rv).